We begin with the raw amino-acid sequence, 281 residues long: MTSFLHAYFTRLHCQPLGVPTVEALRTLHLAHNCAIPFENLDVLLPREIQLDETALEEKLLYARRGGYCFELNGLFERALRDIGFNVRSLLGRVILSHPASLPPRTHRLLLVDVEDEQWIADVGFGGQTLTAPLRLQAEIAQQTPHGEYRLMQEGSTWILQFRHHEHWQSMYCFDLGVQQQSDHVMGNFWSAHWPQSHFRHHLLMCRHLPDGGKLTLTNFHFTRYHQGHAVEQVNVPDVPSLYQLLQQQFGLGVNDVKHGFTEAELAAVMAAFDTHPEAGK.

The Acyl-thioester intermediate role is filled by Cys-69. Active-site residues include His-107 and Asp-122.

The protein belongs to the arylamine N-acetyltransferase family. As to quaternary structure, monomer and homodimer.

The protein resides in the cytoplasm. The catalysed reaction is an arylamine + acetyl-CoA = an N-acetylarylamine + CoA. It carries out the reaction an N-hydroxyarylamine + acetyl-CoA = an N-acetoxyarylamine + CoA. Inhibited by N-ethylmaleimide and iodoacetamide. Functionally, catalyzes both the acetyl-CoA-dependent N-acetylation of aromatic amines and the O-acetylation of N-hydroxyarylamines. In vitro, catalyzes the O-acetylation of N-hydroxy-Glu-P-1, and the N-acetylation of isoniazid and 2-aminofluorene. In Salmonella typhimurium (strain LT2 / SGSC1412 / ATCC 700720), this protein is Arylamine N-acetyltransferase / N-hydroxyarylamine O-acetyltransferase (nhoA).